A 1102-amino-acid polypeptide reads, in one-letter code: Voltage-gated delayed rectifier potassium channel KCNH8 (1102 aa).

Residues 1 to 225 (MPVMKGLLAP…HFSTFKAGWD (225 aa)) are Cytoplasmic-facing. Residues 18 to 90 (IATRFDGTHS…LQIEKSLEEK (73 aa)) form the PAS domain. A PAC domain is found at 93 to 145 (FKGEIMFYKKNGAPFWCLLDIVPIKNEKGDVVLFLASFKDITDTKVKITSEDK). Basic and acidic residues predominate over residues 142-151 (SEDKKEDRTK). The segment at 142–162 (SEDKKEDRTKGRSRAGSHFDS) is disordered. Residues 226–246 (WLILLATFYVAVTVPYNVCFI) traverse the membrane as a helical segment. Topologically, residues 247–255 (GNEDLSTTR) are extracellular. The helical transmembrane segment at 256–276 (STTVSDIAVEILFIIDIILNF) threads the bilayer. The Cytoplasmic portion of the chain corresponds to 277-298 (RTTYVSKSGQVIFEARSICIHY). A helical transmembrane segment spans residues 299-319 (VTTWFIIDLIAALPFDLLYAF). N320 carries an N-linked (GlcNAc...) asparagine glycan. Topologically, residues 320–327 (NVTVVSLV) are extracellular. A helical; Voltage-sensor transmembrane segment spans residues 328-348 (HLLKTVRLLRLLRLLQKLDRY). Residues 349–357 (SQHSTIVLT) lie on the Cytoplasmic side of the membrane. The helical transmembrane segment at 358–378 (LLMSMFALLAHWMACIWYVIG) threads the bilayer. Over 379 to 419 (KMEREDNSLLKWEVGWLHELGKRLESPYYGNNTLGGPSIRS) the chain is Extracellular. N-linked (GlcNAc...) asparagine glycosylation is present at N409. Residues 420–440 (AYIAALYFTLSSLTSVGFGNV) constitute an intramembrane region (pore-forming). The Selectivity filter motif lies at 434 to 439 (SVGFGN). The Extracellular portion of the chain corresponds to 441 to 448 (SANTDAEK). A helical transmembrane segment spans residues 449 to 469 (IFSICTMLIGALMHALVFGNV). The Cytoplasmic portion of the chain corresponds to 470-1102 (TAIIQRMYSR…DVKDSKAINV (633 aa)). Residues 551–668 (LFECASRGCL…HKFVEDIQHD (118 aa)) are cNMP-binding domain. Polar residues predominate over residues 684-693 (RLSNKSTVSQ). Disordered regions lie at residues 684–743 (RLSN…KKTG), 764–841 (HSPI…PEPR), and 960–991 (LVGS…YSPS). Residues 710–723 (VEDEEEEEVEEEET) are compositionally biased toward acidic residues. Polar residues predominate over residues 724–737 (TSLSPIYTRGSSVS). Over residues 968–984 (TEAHEQNPADSELHHSP) the composition is skewed to basic and acidic residues.

This sequence belongs to the potassium channel family. H (Eag) (TC 1.A.1.20) subfamily. Kv12.1/KCNH8 sub-subfamily. In terms of assembly, the potassium channel is probably composed of a homo- or heterotetrameric complex of pore-forming alpha subunits that can associate with modulating beta subunits.

It localises to the membrane. The catalysed reaction is K(+)(in) = K(+)(out). In terms of biological role, pore-forming (alpha) subunit of a voltage-gated delayed rectifier potassium channel that mediates outward-rectifying potassium currents. Elicits a slowly activating, non-inactivating and slowly deactivation outwards potassium current at depolarizating voltages from -30 mV to +50mV. Shows no obvious change in the activation rate from different holding potentials. Activation is strongly dependent on the pH of the external solution. This is Voltage-gated delayed rectifier potassium channel KCNH8 from Mus musculus (Mouse).